A 359-amino-acid polypeptide reads, in one-letter code: sn-1 acyl-lipid omega-3 desaturase (ferredoxin) (359 aa).

Over residues 1 to 15 (MQLDTISFNNPLNSE) the composition is skewed to polar residues. Positions 1-20 (MQLDTISFNNPLNSETSEDT) are disordered. A run of 2 helical transmembrane segments spans residues 47–67 (LFYFFRDILIIGLLYAVASYL) and 70–90 (WLFFPIFWLMQGTMFWALFVV). Residues 92-96 (HDCGH) carry the Histidine box-1 motif. A Histidine box-2 motif is present at residues 128 to 132 (HRTHH). 2 helical membrane-spanning segments follow: residues 207 to 227 (VLLIGMVGLLGFLTYQWGWMW) and 228 to 248 (LLKYYAVPYLVFIVWLDLVTF). A Histidine box-3 motif is present at residues 294–298 (HHIFL).

Belongs to the fatty acid desaturase type 2 family. Requires Fe(2+) as cofactor.

Its subcellular location is the membrane. The enzyme catalyses a 1-[(9Z,12Z)-octadecdienoyl]-2-acyl-glycerolipid + 2 reduced [2Fe-2S]-[ferredoxin] + O2 + 2 H(+) = a 1-[(9Z,12Z,15Z)-octadectrienoyl]-2-acyl-glycerolipid + 2 oxidized [2Fe-2S]-[ferredoxin] + 2 H2O. It carries out the reaction a 1-[(6Z,9Z,12Z)-octadectrienoyl]-2-acyl-glycerolipid + 2 reduced [2Fe-2S]-[ferredoxin] + O2 + 2 H(+) = a 1-[(6Z,9Z,12Z,15Z)-octadectetraenoyl]-2-acyl-glycerolipid + 2 oxidized [2Fe-2S]-[ferredoxin] + 2 H2O. It participates in lipid metabolism; polyunsaturated fatty acid biosynthesis. Desaturase involved in fatty acid biosynthesis. Introduces a double bond at carbon 15 of linoleoyl and gamma-linolenoyl groups attached to the sn-1 position of the glycerol moiety of membrane glycerolipids. In Nostoc sp. (strain 36), this protein is sn-1 acyl-lipid omega-3 desaturase (ferredoxin).